The chain runs to 313 residues: MAFNHKHILGIEQMSAEDITLILDTAESFKDVSLRSIKKVPTLRGKTVINVFFEASTRTRTSFEIAGKRLSADTVNISASTSAVVKGETLEDTAKNLEAMKPDIIVMRHSCSGAPHYLAERCDFSVINAGDGAHEHPSQALLDLLTIRQKKGHIEGLTVAIIGDITHSRVARSNVYALNKLGAEVRLCGPGTMLPPGIERLGAQVFDRIDDAVSGADVVMMLRIQQERQGKTMLPSLREYSMFYGLTPDRMKLAKPDAIVMHPGPMNRGVEISSAVADGPQNVILDQVENGVAVRMALLYLVSGGEKLEDSAQ.

Positions 58 and 59 each coordinate carbamoyl phosphate. Residue Lys-86 coordinates L-aspartate. Carbamoyl phosphate is bound by residues Arg-108, His-136, and Gln-139. Arg-169 and Arg-223 together coordinate L-aspartate. The carbamoyl phosphate site is built by Gly-264 and Pro-265.

The protein belongs to the aspartate/ornithine carbamoyltransferase superfamily. ATCase family. Heterododecamer (2C3:3R2) of six catalytic PyrB chains organized as two trimers (C3), and six regulatory PyrI chains organized as three dimers (R2).

It carries out the reaction carbamoyl phosphate + L-aspartate = N-carbamoyl-L-aspartate + phosphate + H(+). It functions in the pathway pyrimidine metabolism; UMP biosynthesis via de novo pathway; (S)-dihydroorotate from bicarbonate: step 2/3. In terms of biological role, catalyzes the condensation of carbamoyl phosphate and aspartate to form carbamoyl aspartate and inorganic phosphate, the committed step in the de novo pyrimidine nucleotide biosynthesis pathway. This Syntrophotalea carbinolica (strain DSM 2380 / NBRC 103641 / GraBd1) (Pelobacter carbinolicus) protein is Aspartate carbamoyltransferase catalytic subunit.